The primary structure comprises 213 residues: Nicolin-1 (213 aa).

Part of the neuronal tubulin polyglutamylase complex which contains TPGS1, TPGS2, TTLL1, LRRC49 and NICN1. As to expression, high expression level is found in brain, testis, liver and kidney. Weak expression in spleen, leukocytes, small intestin and colon.

The protein localises to the nucleus. The protein is Nicolin-1 (Nicn1) of Mus musculus (Mouse).